The chain runs to 572 residues: Urease subunit alpha (572 aa).

In terms of domain architecture, Urease spans 134 to 572 (AGIDSHIHLI…AAMNQRYFFG (439 aa)). Positions 139, 141, and 222 each coordinate Ni(2+). Lysine 222 carries the N6-carboxylysine modification. Histidine 224 lines the substrate pocket. Ni(2+) is bound by residues histidine 251 and histidine 277. Histidine 325 (proton donor) is an active-site residue. A Ni(2+)-binding site is contributed by aspartate 365.

Belongs to the metallo-dependent hydrolases superfamily. Urease alpha subunit family. In terms of assembly, heterotrimer of UreA (gamma), UreB (beta) and UreC (alpha) subunits. Three heterotrimers associate to form the active enzyme. It depends on Ni cation as a cofactor. Post-translationally, carboxylation allows a single lysine to coordinate two nickel ions.

The protein resides in the cytoplasm. The enzyme catalyses urea + 2 H2O + H(+) = hydrogencarbonate + 2 NH4(+). The protein operates within nitrogen metabolism; urea degradation; CO(2) and NH(3) from urea (urease route): step 1/1. The sequence is that of Urease subunit alpha from Yersinia enterocolitica serotype O:8 / biotype 1B (strain NCTC 13174 / 8081).